Here is an 880-residue protein sequence, read N- to C-terminus: MSVFKKKDKSDDKKKKHDEETPQGTFQPASQSTSNTNLNSLASSVNNGASVGSTNGSTPNNSNGSTPTYNHNNSAEELEKQKKEEDEKRKKSELEAAAAVVAKKKEDEEKQRKEQVELERKRRDEEIRRTNAAAANAANKELNEQVEISSLEQMGKLDPSSTIHDMFSFFPNEVYNSYEKLQYFSRDLNTAVSHPEIVFVGPRSSGKSSLIEAFIGRALNIVGGGNIVGVGGSNANGCSKRVLYLQFTNNIDFEVPKVTIKKDNTIKEFDHDIIVSIEQLNENLAKRNQLTNDYIEEPIYVSIESRTTLNLTLIDSPGLLFDQSQAESNKIESIVSSLLRPSHRLIIAVESCSQDWKSMSMGQYLKKIDPELSRSTFVFTKFHHTVRGFSSTRDINKYLSGTVPDIKGFFVTLPNHQVRASYSEANRFQEKIYQAHKRDMHALEQLQYDKRYERTIGVAPLRRYILNIVWKSYQDTIPRILKHLRSKRQTAEATLNELQKQSSSLDSTKLRSIASNYTVTFLQITEKLLSGTSEGNPSANGQTLDEEKSQQGDCGEWVDAYKEAIYIDPEEWNIPYWSSKLYGGQQLERLMAEFKAVCDNSKISEVKMDDIATASGINKLNNIPNYAWAASDLTSLISRDTFVPLIEQLCERAMYIMKRLTDIADKVIDSRRKSRCIGSSPFGGNGLNNINSGGNNGININDRLSNTDMDSLDQYPFFTHHVKNLYYDFVHRAAKGCKEKCMDEFYSSRTIYWELTEHPDSSLPSIRNDHHETKTAVCQLATKLFDSIRQRITKNVLLKLYNFFLVPMQTDLWNEIQAQITCLSNEQLEQLFEVQATREQLKQEEKKQQQILEKYSQIDEQFLKAASLFCRPLSNPTPSA.

The tract at residues 1–124 (MSVFKKKDKS…QVELERKRRD (124 aa)) is disordered. Basic and acidic residues predominate over residues 8–20 (DKSDDKKKKHDEE). Over residues 22-31 (PQGTFQPASQ) the composition is skewed to polar residues. Residues 32–68 (STSNTNLNSLASSVNNGASVGSTNGSTPNNSNGSTPT) are compositionally biased toward low complexity. A coiled-coil region spans residues 69–152 (YNHNNSAEEL…NEQVEISSLE (84 aa)). 2 stretches are compositionally biased toward basic and acidic residues: residues 77–94 (ELEK…KSEL) and 103–124 (KKKE…KRRD). Residues 191-478 (AVSHPEIVFV…VWKSYQDTIP (288 aa)) enclose the Dynamin-type G domain. A G1 motif region spans residues 201-208 (GPRSSGKS). 201–208 (GPRSSGKS) contributes to the GTP binding site. The interval 227–240 (IVGVGGSNANGCSK) is G2 motif. Residues 315 to 318 (DSPG) form a G3 motif region. GTP-binding positions include 315-319 (DSPGL) and 380-383 (TKFH). The interval 380-383 (TKFH) is G4 motif. The G5 motif stretch occupies residues 413–416 (LPNH). Positions 479-509 (RILKHLRSKRQTAEATLNELQKQSSSLDSTK) form a coiled coil. Polar residues predominate over residues 532-543 (TSEGNPSANGQT). The tract at residues 532–551 (TSEGNPSANGQTLDEEKSQQ) is disordered. Residues 824–861 (SNEQLEQLFEVQATREQLKQEEKKQQQILEKYSQIDEQ) are a coiled coil.

The protein belongs to the TRAFAC class dynamin-like GTPase superfamily. Dynamin/Fzo/YdjA family.

It is found in the cytoplasm. It localises to the cleavage furrow. The enzyme catalyses GTP + H2O = GDP + phosphate + H(+). Its function is as follows. Involved in cytokinesis. May hydrolyze GTP. This Dictyostelium discoideum (Social amoeba) protein is Dynamin-like protein A (dlpA).